Here is a 714-residue protein sequence, read N- to C-terminus: Epithelial splicing regulatory protein 1 (714 aa).

3 RRM domains span residues 225–302 (TVIR…KATG), 326–406 (IIVR…KSTA), and 450–530 (DCVR…ACSA).

This sequence belongs to the ESRP family.

It is found in the nucleus. Its function is as follows. mRNA splicing factor that regulates the formation of epithelial cell-specific isoforms. Specifically regulates the expression of FGFR2-IIIb, an epithelial cell-specific isoform of fgfr2. Acts by directly binding specific sequences in mRNAs. Binds the GU-rich sequence motifs in the ISE/ISS-3, a cis-element regulatory region present in the mRNA of fgfr2. The sequence is that of Epithelial splicing regulatory protein 1 (esrp1) from Danio rerio (Zebrafish).